The following is an 81-amino-acid chain: Photosystem I iron-sulfur center (81 aa).

4Fe-4S ferredoxin-type domains lie at 2–31 (AHIVKIYDTCIGCTQCVRACPLDVLEMVPW) and 39–68 (MASAPRTEDCVGCKRCETACPTDFLSVRVY). 8 residues coordinate [4Fe-4S] cluster: Cys-11, Cys-14, Cys-17, Cys-21, Cys-48, Cys-51, Cys-54, and Cys-58.

As to quaternary structure, the eukaryotic PSI reaction center is composed of at least 11 subunits. It depends on [4Fe-4S] cluster as a cofactor.

It localises to the plastid. The protein resides in the chloroplast thylakoid membrane. It catalyses the reaction reduced [plastocyanin] + hnu + oxidized [2Fe-2S]-[ferredoxin] = oxidized [plastocyanin] + reduced [2Fe-2S]-[ferredoxin]. Apoprotein for the two 4Fe-4S centers FA and FB of photosystem I (PSI); essential for photochemical activity. FB is the terminal electron acceptor of PSI, donating electrons to ferredoxin. The C-terminus interacts with PsaA/B/D and helps assemble the protein into the PSI complex. Required for binding of PsaD and PsaE to PSI. PSI is a plastocyanin/cytochrome c6-ferredoxin oxidoreductase, converting photonic excitation into a charge separation, which transfers an electron from the donor P700 chlorophyll pair to the spectroscopically characterized acceptors A0, A1, FX, FA and FB in turn. This is Photosystem I iron-sulfur center from Chlamydomonas reinhardtii (Chlamydomonas smithii).